The sequence spans 419 residues: Elongation factor Tu, chloroplastic (419 aa).

The tr-type G domain occupies 10–214 (KPHVNIGTIG…KVDEYIPTPD (205 aa)). The G1 stretch occupies residues 19 to 26 (GHVDHGKT). Position 19–26 (19–26 (GHVDHGKT)) interacts with GTP. Residue T26 participates in Mg(2+) binding. Residues 60 to 64 (GITIN) form a G2 region. The G3 stretch occupies residues 81-84 (DCPG). Residues 81–85 (DCPGH) and 136–139 (NKED) each bind GTP. The segment at 136 to 139 (NKED) is G4. Residues 174–176 (SAL) form a G5 region.

The protein belongs to the TRAFAC class translation factor GTPase superfamily. Classic translation factor GTPase family. EF-Tu/EF-1A subfamily.

It localises to the plastid. The protein localises to the chloroplast. The catalysed reaction is GTP + H2O = GDP + phosphate + H(+). Functionally, GTP hydrolase that promotes the GTP-dependent binding of aminoacyl-tRNA to the A-site of ribosomes during protein biosynthesis. The polypeptide is Elongation factor Tu, chloroplastic (tufA) (Tetradesmus obliquus (Green alga)).